Consider the following 125-residue polypeptide: MSGRGKGGKAKAKAKSRSSRAGLQFPVGRIHRLLRKGNYAERVGAGAPVYLAAVLEYLAAEVLELAGNAARDNKKSRIIPRHLQLAIRNDEELNKLLSGVTIAQGGVLPNIQAVLLPKKTQKAAK.

Residues 1–18 (MSGRGKGGKAKAKAKSRS) show a composition bias toward basic residues. The interval 1-21 (MSGRGKGGKAKAKAKSRSSRA) is disordered. Ser-2 carries the post-translational modification N-acetylserine. Gln-104 carries the N5-methylglutamine modification.

The protein belongs to the histone H2A family. In terms of assembly, the nucleosome is a histone octamer containing two molecules each of H2A, H2B, H3 and H4 assembled in one H3-H4 heterotetramer and two H2A-H2B heterodimers. The octamer wraps approximately 147 bp of DNA.

The protein localises to the nucleus. The protein resides in the chromosome. Core component of nucleosome. Nucleosomes wrap and compact DNA into chromatin, limiting DNA accessibility to the cellular machineries which require DNA as a template. Histones thereby play a central role in transcription regulation, DNA repair, DNA replication and chromosomal stability. DNA accessibility is regulated via a complex set of post-translational modifications of histones, also called histone code, and nucleosome remodeling. The sequence is that of Histone H2A from Mytilus californianus (California mussel).